The primary structure comprises 265 residues: Small ribosomal subunit protein eS4 (265 aa).

An S4 RNA-binding domain is found at 42–104 (LPLILIIRNR…TGENYRLLYD (63 aa)).

It belongs to the eukaryotic ribosomal protein eS4 family.

The protein localises to the cytoplasm. The polypeptide is Small ribosomal subunit protein eS4 (RPS4) (Oryza sativa subsp. japonica (Rice)).